Reading from the N-terminus, the 197-residue chain is ATP synthase subunit delta', mitochondrial (197 aa).

A mitochondrion-targeting transit peptide spans 1–19 (MFRRATSTFLSRASATRRF).

It belongs to the ATPase epsilon chain family. In terms of assembly, F-type ATPases have 2 components, CF(1) - the catalytic core - and CF(0) - the membrane proton channel. CF(1) has five subunits: alpha(3), beta(3), gamma(1), delta(1), epsilon(1). CF(0) has three main subunits: a, b and c.

The protein localises to the mitochondrion. Its subcellular location is the mitochondrion inner membrane. Functionally, mitochondrial membrane ATP synthase (F(1)F(0) ATP synthase or Complex V) produces ATP from ADP in the presence of a proton gradient across the membrane which is generated by electron transport complexes of the respiratory chain. F-type ATPases consist of two structural domains, F(1) - containing the extramembraneous catalytic core, and F(0) - containing the membrane proton channel, linked together by a central stalk and a peripheral stalk. During catalysis, ATP turnover in the catalytic domain of F(1) is coupled via a rotary mechanism of the central stalk subunits to proton translocation. Part of the complex F(1) domain and of the central stalk which is part of the complex rotary element. Rotation of the central stalk against the surrounding alpha(3)beta(3) subunits leads to hydrolysis of ATP in three separate catalytic sites on the beta subunits. The polypeptide is ATP synthase subunit delta', mitochondrial (Pisum sativum (Garden pea)).